An 882-amino-acid chain; its full sequence is Translation initiation factor IF-2 (882 aa).

The tract at residues 57 to 211 (YIPANKTKDK…KDKSKPKVAT (155 aa)) is disordered. The segment covering 104 to 115 (TTSEKQKDKGEQ) has biased composition (basic and acidic residues). Positions 199–211 (RHKKDKSKPKVAT) are enriched in basic residues. The 170-residue stretch at 381–550 (ERPPVVTIMG…LIQAEVLELK (170 aa)) folds into the tr-type G domain. Residues 390–397 (GHVDHGKT) are G1. GTP is bound at residue 390-397 (GHVDHGKT). The G2 stretch occupies residues 415–419 (GITQH). The segment at 436–439 (DTPG) is G3. Residues 436–440 (DTPGH) and 490–493 (NKMD) each bind GTP. The G4 stretch occupies residues 490-493 (NKMD). Positions 526-528 (SAK) are G5.

The protein belongs to the TRAFAC class translation factor GTPase superfamily. Classic translation factor GTPase family. IF-2 subfamily.

The protein localises to the cytoplasm. In terms of biological role, one of the essential components for the initiation of protein synthesis. Protects formylmethionyl-tRNA from spontaneous hydrolysis and promotes its binding to the 30S ribosomal subunits. Also involved in the hydrolysis of GTP during the formation of the 70S ribosomal complex. This is Translation initiation factor IF-2 from Helicobacter hepaticus (strain ATCC 51449 / 3B1).